We begin with the raw amino-acid sequence, 417 residues long: NADH-quinone oxidoreductase subunit F (417 aa).

Residue 54–63 participates in NAD(+) binding; it reads GRGGAGFSTG. 166 to 213 is a binding site for FMN; the sequence is GAGAYICGEETALLESLEGKKGMPRLKPPFPAGFGLYGCPTTINNVES. The [4Fe-4S] cluster site is built by cysteine 345, cysteine 348, cysteine 351, and cysteine 391.

This sequence belongs to the complex I 51 kDa subunit family. FMN is required as a cofactor. [4Fe-4S] cluster serves as cofactor.

The catalysed reaction is a quinone + NADH + 5 H(+)(in) = a quinol + NAD(+) + 4 H(+)(out). In terms of biological role, NDH-1 shuttles electrons from NADH, via FMN and iron-sulfur (Fe-S) centers, to quinones in the respiratory chain. Couples the redox reaction to proton translocation (for every two electrons transferred, four hydrogen ions are translocated across the cytoplasmic membrane), and thus conserves the redox energy in a proton gradient. This Rickettsia bellii (strain OSU 85-389) protein is NADH-quinone oxidoreductase subunit F (nuoF).